A 230-amino-acid chain; its full sequence is Ribonuclease HII (230 aa).

One can recognise an RNase H type-2 domain in the interval 28–217 (FRIAGIDEAG…VKEHLPSQPD (190 aa)). A divalent metal cation-binding residues include Asp34, Glu35, and Asp126. Positions 211 to 230 (HLPSQPDCDTAGPSTGLFSF) are disordered.

The protein belongs to the RNase HII family. Mn(2+) serves as cofactor. Requires Mg(2+) as cofactor.

It is found in the cytoplasm. It carries out the reaction Endonucleolytic cleavage to 5'-phosphomonoester.. In terms of biological role, endonuclease that specifically degrades the RNA of RNA-DNA hybrids. The protein is Ribonuclease HII of Geobacter sp. (strain M21).